Here is a 374-residue protein sequence, read N- to C-terminus: MENFPTEYFLNTTVRLLEYIRYRDSNYTREERIENLHYAYNKAAHHFAQPRQQQLLKVDPKRLQASLQTIVGMVVYSWAKVSKECMADLSIHYTYTLVLDDSKDDPYPTMVNYFDDLQAGREQAHPWWALVNEHFPNVLRHFGPFCSLNLIRSTLDFFEGCWIEQYNFGGFPGSHDYPQFLRRMNGLGHCVGASLWPKEQFNERSLFLEITSAIAQMENWMVWVNDLMSFYKEFDDERDQISLVKNYVVSDEISLHEALEKLTQDTLHSSKQMVAVFSDKDPQVMDTIECFMHGYVTWHLCDRRYRLSEIYEKVKEEKTEDAQKFCKFYEQAANVGAVSPSEWAYPPVAQLANVRSKDVKEVQKPFLSSIELVE.

Positions 100, 164, 225, 229, 233, 239, and 241 each coordinate Mg(2+). Residues 100 to 104 (DDSKD) are aspartate-rich domain.

Belongs to the trichodiene synthase family. The cofactor is Mg(2+). Mn(2+) serves as cofactor.

The catalysed reaction is (2E,6E)-farnesyl diphosphate = trichodiene + diphosphate. It functions in the pathway sesquiterpene biosynthesis; trichothecene biosynthesis. With respect to regulation, benzyl triethylammonium cation (BTAC) acts as a competitive inhibitor of trichodiene synthase reaction in the presence of pyrophosphate (PPi). Functionally, trichodiene synthase; part of the core gene cluster that mediates the biosynthesis of trichothecenes, a very large family of chemically related bicyclic sesquiterpene compounds acting as mycotoxins, including T2-toxin. The biosynthesis of trichothecenes begins with the cyclization of farnesyl diphosphate to trichodiene and is catalyzed by the trichodiene synthase TRI5. Trichodiene undergoes a series of oxygenations catalyzed by the cytochrome P450 monooxygenase TRI4. TRI4 controls the addition of four oxygens at C-2, C-3, C-11, and the C-12, C-13-epoxide to form the intermediate isotrichotriol. Isotrichotriol then undergoes a non-enzymatic isomerization and cyclization to form isotrichodermol. During this process, the oxygen at the C-2 position becomes the pyran ring oxygen and the hydroxyl group at C-11 is lost. More complex type A trichothecenes are built by modifying isotrichodermol through a series of paired hydroxylation and acetylation or acylation steps. Isotrichodermol is converted to isotrichodermin by the acetyltransferase TRI101. TRI101 encodes a C-3 transacetylase that acts as a self-protection or resistance factor during biosynthesis and that the presence of a free C-3 hydroxyl group is a key component of Fusarium trichothecene phytotoxicity. A second hydroxyl group is added to C-15 by the trichothecene C-15 hydroxylase TRI11, producing 15-decalonectrin, which is then acetylated by TRI3, producing calonectrin. A third hydroxyl group is added at C-4 by the cytochrome P450 monooxygenase TRI13, converting calonectrin to 3,15-diacetoxyspirpenol, which is subsequently acetylated by the acetyltransferase TRI7. A fourth hydroxyl group is added to C-8 by the cytochrome P450 monooxygenase TRI1, followed by the addition of an isovaleryl moiety by TRI16. Finally, the acetyl group is removed from the C-3 position by the trichothecene C-3 esterase TRI8 to produce T-2 toxin. This is Trichodiene synthase from Fusarium sporotrichioides.